Reading from the N-terminus, the 352-residue chain is Holliday junction branch migration complex subunit RuvB (352 aa).

The large ATPase domain (RuvB-L) stretch occupies residues 4-185 (PDRLISAVSG…FGIVQRLEFY (182 aa)). Residues Ile-24, Arg-25, Gly-66, Lys-69, Thr-70, Thr-71, 132–134 (EDF), Arg-175, Tyr-185, and Arg-222 contribute to the ATP site. Thr-70 is a binding site for Mg(2+). The interval 186 to 256 (NVEDLATIVS…IADKALNLLD (71 aa)) is small ATPAse domain (RuvB-S). The segment at 259-352 (ERGFDHLDRR…SDLFTSEDGN (94 aa)) is head domain (RuvB-H). DNA-binding residues include Arg-295, Arg-314, and Arg-319.

This sequence belongs to the RuvB family. In terms of assembly, homohexamer. Forms an RuvA(8)-RuvB(12)-Holliday junction (HJ) complex. HJ DNA is sandwiched between 2 RuvA tetramers; dsDNA enters through RuvA and exits via RuvB. An RuvB hexamer assembles on each DNA strand where it exits the tetramer. Each RuvB hexamer is contacted by two RuvA subunits (via domain III) on 2 adjacent RuvB subunits; this complex drives branch migration. In the full resolvosome a probable DNA-RuvA(4)-RuvB(12)-RuvC(2) complex forms which resolves the HJ.

The protein localises to the cytoplasm. It carries out the reaction ATP + H2O = ADP + phosphate + H(+). Its function is as follows. The RuvA-RuvB-RuvC complex processes Holliday junction (HJ) DNA during genetic recombination and DNA repair, while the RuvA-RuvB complex plays an important role in the rescue of blocked DNA replication forks via replication fork reversal (RFR). RuvA specifically binds to HJ cruciform DNA, conferring on it an open structure. The RuvB hexamer acts as an ATP-dependent pump, pulling dsDNA into and through the RuvAB complex. RuvB forms 2 homohexamers on either side of HJ DNA bound by 1 or 2 RuvA tetramers; 4 subunits per hexamer contact DNA at a time. Coordinated motions by a converter formed by DNA-disengaged RuvB subunits stimulates ATP hydrolysis and nucleotide exchange. Immobilization of the converter enables RuvB to convert the ATP-contained energy into a lever motion, pulling 2 nucleotides of DNA out of the RuvA tetramer per ATP hydrolyzed, thus driving DNA branch migration. The RuvB motors rotate together with the DNA substrate, which together with the progressing nucleotide cycle form the mechanistic basis for DNA recombination by continuous HJ branch migration. Branch migration allows RuvC to scan DNA until it finds its consensus sequence, where it cleaves and resolves cruciform DNA. This is Holliday junction branch migration complex subunit RuvB from Pseudomonas paraeruginosa (strain DSM 24068 / PA7) (Pseudomonas aeruginosa (strain PA7)).